Reading from the N-terminus, the 405-residue chain is Argininosuccinate synthase (405 aa).

Residues Ala10–Ser18 and Ala37 each bind ATP. Positions 88 and 93 each coordinate L-citrulline. Position 118 (Gly118) interacts with ATP. Positions 120, 124, and 125 each coordinate L-aspartate. Residue Asn124 participates in L-citrulline binding. Positions 128, 179, 188, 264, and 276 each coordinate L-citrulline.

This sequence belongs to the argininosuccinate synthase family. Type 1 subfamily. Homotetramer.

The protein localises to the cytoplasm. The enzyme catalyses L-citrulline + L-aspartate + ATP = 2-(N(omega)-L-arginino)succinate + AMP + diphosphate + H(+). Its pathway is amino-acid biosynthesis; L-arginine biosynthesis; L-arginine from L-ornithine and carbamoyl phosphate: step 2/3. This is Argininosuccinate synthase from Pseudomonas syringae pv. tomato (strain ATCC BAA-871 / DC3000).